We begin with the raw amino-acid sequence, 147 residues long: Spermidine export protein MdtJ (147 aa).

The next 4 helical transmembrane spans lie at 1–21, 31–51, 54–74, and 81–101; these read MIYW…TLSM, TGHI…SLAV, VALG…ITIF, and ETLS…ILLV. Basic residues predominate over residues 105–117; sequence TRKPKQPNRHRGN. The tract at residues 105 to 147 is disordered; that stretch reads TRKPKQPNRHRGNRPPSVQGLKTQTTGHHKGVAVESGEHHAAA.

This sequence belongs to the drug/metabolite transporter (DMT) superfamily. Small multidrug resistance (SMR) (TC 2.A.7.1) family. MdtJ subfamily. As to quaternary structure, forms a complex with MdtI.

It is found in the cell inner membrane. Catalyzes the excretion of spermidine. This Yersinia pseudotuberculosis serotype O:3 (strain YPIII) protein is Spermidine export protein MdtJ.